The chain runs to 79 residues: Acyl carrier protein (79 aa).

Residues 2-77 enclose the Carrier domain; sequence SDVAERVKKI…DAIDFIKANA (76 aa). At serine 37 the chain carries O-(pantetheine 4'-phosphoryl)serine.

It belongs to the acyl carrier protein (ACP) family. 4'-phosphopantetheine is transferred from CoA to a specific serine of apo-ACP by AcpS. This modification is essential for activity because fatty acids are bound in thioester linkage to the sulfhydryl of the prosthetic group.

It localises to the cytoplasm. The protein operates within lipid metabolism; fatty acid biosynthesis. Its function is as follows. Carrier of the growing fatty acid chain in fatty acid biosynthesis. The polypeptide is Acyl carrier protein (Azospirillum brasilense).